We begin with the raw amino-acid sequence, 651 residues long: Gag-Pro polyprotein (651 aa).

Gly-2 carries the N-myristoyl glycine; by host lipid modification. The segment at 93–144 (QIPSRPAPPPPSSPTHDPPDSDPQIPPPYVEPTAPQVLPVMHPHGAPPNHRP) is disordered. Phosphoserine; by host MAPK1 is present on Ser-105. The PPXY motif motif lies at 118 to 121 (PPPY). The PTAP/PSAP motif signature appears at 124 to 127 (PTAP). 2 consecutive CCHC-type zinc fingers follow at residues 355-372 (QPCF…DCTQ) and 378-395 (GPCP…DCPR). The 79-residue stretch at 476 to 554 (IEALLDTGAD…NNWAIIGRDA (79 aa)) folds into the Peptidase A2 domain. Asp-481 serves as the catalytic For protease activity; shared with dimeric partner.

In terms of assembly, homodimer; the homodimers are part of the immature particles. Interacts with human TSG101 and NEDD4; these interactions are essential for budding and release of viral particles. As to quaternary structure, homodimer; further assembles as homohexamers. In terms of processing, specific enzymatic cleavages by the viral protease yield mature proteins. The polyprotein is cleaved during and after budding, this process is termed maturation. The protease is autoproteolytically processed at its N- and C-termini. Phosphorylation of the matrix protein p19 by MAPK1 seems to play a role in budding. Post-translationally, myristoylated. Myristoylation of the matrix (MA) domain mediates the transport and binding of Gag polyproteins to the host plasma membrane and is required for the assembly of viral particles.

It localises to the virion. The matrix domain targets Gag, Gag-Pro and Gag-Pro-Pol polyproteins to the plasma membrane via a multipartite membrane binding signal, that includes its myristoylated N-terminus. Functionally, matrix protein. In terms of biological role, forms the spherical core of the virus that encapsulates the genomic RNA-nucleocapsid complex. Its function is as follows. Binds strongly to viral nucleic acids and promote their aggregation. Also destabilizes the nucleic acids duplexes via highly structured zinc-binding motifs. The aspartyl protease mediates proteolytic cleavages of Gag and Gag-Pol polyproteins during or shortly after the release of the virion from the plasma membrane. Cleavages take place as an ordered, step-wise cascade to yield mature proteins. This process is called maturation. Displays maximal activity during the budding process just prior to particle release from the cell. Cleaves the translation initiation factor eIF4G leading to the inhibition of host cap-dependent translation. This chain is Gag-Pro polyprotein (gag-pro), found in Human T-cell leukemia virus 1 (strain Japan ATK-1 subtype A) (HTLV-1).